The following is a 161-amino-acid chain: Arginine repressor (161 aa).

This sequence belongs to the ArgR family.

The protein resides in the cytoplasm. It participates in amino-acid biosynthesis; L-arginine biosynthesis [regulation]. In terms of biological role, regulates arginine biosynthesis genes. In Corynebacterium aurimucosum (strain ATCC 700975 / DSM 44827 / CIP 107346 / CN-1) (Corynebacterium nigricans), this protein is Arginine repressor.